Here is a 495-residue protein sequence, read N- to C-terminus: Probable cytochrome P450 513C1 (495 aa).

A helical transmembrane segment spans residues 1 to 21; sequence MNYLVLILVSLVSIYFLFIKN. Cys-441 contributes to the heme binding site.

This sequence belongs to the cytochrome P450 family. It depends on heme as a cofactor.

The protein localises to the membrane. This is Probable cytochrome P450 513C1 (cyp513C1) from Dictyostelium discoideum (Social amoeba).